The following is a 666-amino-acid chain: Probable potassium transport system protein Kup (666 aa).

The next 12 membrane-spanning stretches (helical) occupy residues 16-36 (GFII…LYTM), 58-78 (ISLI…LVAL), 99-119 (TPWL…DGAL), 141-161 (IFQN…LLFA), 167-187 (TGVI…FLGI), 221-241 (IFIL…YSDL), 253-273 (WPFV…WILA), 292-312 (FTMH…QALI), 343-363 (TYIP…VLLF), 373-393 (YGLA…FFLI), 402-422 (VLLM…ASAV), and 424-444 (FMHG…IMTI).

It belongs to the HAK/KUP transporter (TC 2.A.72) family.

Its subcellular location is the cell membrane. The enzyme catalyses K(+)(in) + H(+)(in) = K(+)(out) + H(+)(out). In terms of biological role, transport of potassium into the cell. Likely operates as a K(+):H(+) symporter. This is Probable potassium transport system protein Kup from Streptococcus agalactiae serotype V (strain ATCC BAA-611 / 2603 V/R).